Here is a 142-residue protein sequence, read N- to C-terminus: Large ribosomal subunit protein uL13 (142 aa).

It belongs to the universal ribosomal protein uL13 family. As to quaternary structure, part of the 50S ribosomal subunit.

This protein is one of the early assembly proteins of the 50S ribosomal subunit, although it is not seen to bind rRNA by itself. It is important during the early stages of 50S assembly. The sequence is that of Large ribosomal subunit protein uL13 from Chromohalobacter salexigens (strain ATCC BAA-138 / DSM 3043 / CIP 106854 / NCIMB 13768 / 1H11).